The primary structure comprises 87 residues: uncharacterized protein (87 aa).

The next 2 helical transmembrane spans lie at 10–30 (VAFTVLAYFTFFAGVFLFSIG) and 43–63 (GYYIAVMILVAVGAILTQKVT).

The protein resides in the cell membrane. This is an uncharacterized protein from Bacillus subtilis (strain 168).